The sequence spans 181 residues: MGEKDQLRPKVNVSSYIHFMLNFRNKFKEQQPNTYLGFKEFSRKCSEKWRSISKHEKAKYEALAELDKARYQQEMMNYIGKRRKRRKRDPKAPRKPPSSFLLFSRDHYAMLKQENPDWTVVQVAKAAGKMWSTTDEAEKKPYEQKAALMRAKYFEEQEAYRNQCQGRKGNFLESAKTSLKQ.

The HMG box 1 DNA-binding region spans 9–79 (PKVNVSSYIH…RYQQEMMNYI (71 aa)). Positions 80-89 (GKRRKRRKRD) are enriched in basic residues. Residues 80–100 (GKRRKRRKRDPKAPRKPPSSF) are disordered. Positions 93 to 161 (PRKPPSSFLL…KYFEEQEAYR (69 aa)) form a DNA-binding region, HMG box 2.

The protein belongs to the HMGB family. As to expression, expressed in adult germ cells (at protein level).

Its subcellular location is the nucleus. It localises to the chromosome. This Mus musculus (Mouse) protein is High mobility group protein B4 (Hmgb4).